Here is a 570-residue protein sequence, read N- to C-terminus: Proline--tRNA ligase (570 aa).

The protein belongs to the class-II aminoacyl-tRNA synthetase family. ProS type 1 subfamily. Homodimer.

Its subcellular location is the cytoplasm. It catalyses the reaction tRNA(Pro) + L-proline + ATP = L-prolyl-tRNA(Pro) + AMP + diphosphate. Catalyzes the attachment of proline to tRNA(Pro) in a two-step reaction: proline is first activated by ATP to form Pro-AMP and then transferred to the acceptor end of tRNA(Pro). As ProRS can inadvertently accommodate and process non-cognate amino acids such as alanine and cysteine, to avoid such errors it has two additional distinct editing activities against alanine. One activity is designated as 'pretransfer' editing and involves the tRNA(Pro)-independent hydrolysis of activated Ala-AMP. The other activity is designated 'posttransfer' editing and involves deacylation of mischarged Ala-tRNA(Pro). The misacylated Cys-tRNA(Pro) is not edited by ProRS. The sequence is that of Proline--tRNA ligase from Clostridium tetani (strain Massachusetts / E88).